The primary structure comprises 162 residues: 2-C-methyl-D-erythritol 2,4-cyclodiphosphate synthase (162 aa).

2 residues coordinate a divalent metal cation: aspartate 9 and histidine 11. Residues 9–11 (DFH) and 37–38 (HS) contribute to the 4-CDP-2-C-methyl-D-erythritol 2-phosphate site. Histidine 45 serves as a coordination point for a divalent metal cation. 4-CDP-2-C-methyl-D-erythritol 2-phosphate contacts are provided by residues 59–61 (DIG), 64–68 (FPDTD), 135–138 (TTSE), and arginine 145.

Belongs to the IspF family. In terms of assembly, homotrimer. The cofactor is a divalent metal cation.

The catalysed reaction is 4-CDP-2-C-methyl-D-erythritol 2-phosphate = 2-C-methyl-D-erythritol 2,4-cyclic diphosphate + CMP. It functions in the pathway isoprenoid biosynthesis; isopentenyl diphosphate biosynthesis via DXP pathway; isopentenyl diphosphate from 1-deoxy-D-xylulose 5-phosphate: step 4/6. Functionally, involved in the biosynthesis of isopentenyl diphosphate (IPP) and dimethylallyl diphosphate (DMAPP), two major building blocks of isoprenoid compounds. Catalyzes the conversion of 4-diphosphocytidyl-2-C-methyl-D-erythritol 2-phosphate (CDP-ME2P) to 2-C-methyl-D-erythritol 2,4-cyclodiphosphate (ME-CPP) with a corresponding release of cytidine 5-monophosphate (CMP). This chain is 2-C-methyl-D-erythritol 2,4-cyclodiphosphate synthase, found in Leptospira biflexa serovar Patoc (strain Patoc 1 / Ames).